The sequence spans 150 residues: 3-hydroxyacyl-[acyl-carrier-protein] dehydratase FabZ (150 aa).

The active site involves His-54.

The protein belongs to the thioester dehydratase family. FabZ subfamily.

The protein resides in the cytoplasm. It carries out the reaction a (3R)-hydroxyacyl-[ACP] = a (2E)-enoyl-[ACP] + H2O. Its function is as follows. Involved in unsaturated fatty acids biosynthesis. Catalyzes the dehydration of short chain beta-hydroxyacyl-ACPs and long chain saturated and unsaturated beta-hydroxyacyl-ACPs. This is 3-hydroxyacyl-[acyl-carrier-protein] dehydratase FabZ from Psychromonas ingrahamii (strain DSM 17664 / CCUG 51855 / 37).